Reading from the N-terminus, the 377-residue chain is GDSL esterase/lipase 4 (377 aa).

A signal peptide spans 1–21 (MASPRFNSIIIILFICTISLS). The active-site Nucleophile is the Ser44. N-linked (GlcNAc...) asparagine glycans are attached at residues Asn135, Asn188, Asn194, Asn207, and Asn241. Residues Asp342 and His345 contribute to the active site. The N-linked (GlcNAc...) asparagine glycan is linked to Asn364.

It belongs to the 'GDSL' lipolytic enzyme family.

Its subcellular location is the secreted. The sequence is that of GDSL esterase/lipase 4 (GLIP4) from Arabidopsis thaliana (Mouse-ear cress).